Reading from the N-terminus, the 118-residue chain is Large ribosomal subunit protein uL18 (118 aa).

The protein belongs to the universal ribosomal protein uL18 family. In terms of assembly, part of the 50S ribosomal subunit; part of the 5S rRNA/L5/L18/L25 subcomplex. Contacts the 5S and 23S rRNAs.

Functionally, this is one of the proteins that bind and probably mediate the attachment of the 5S RNA into the large ribosomal subunit, where it forms part of the central protuberance. The chain is Large ribosomal subunit protein uL18 from Sulfurimonas denitrificans (strain ATCC 33889 / DSM 1251) (Thiomicrospira denitrificans (strain ATCC 33889 / DSM 1251)).